A 482-amino-acid polypeptide reads, in one-letter code: tRNA sulfurtransferase (482 aa).

In terms of domain architecture, THUMP spans 61–165 (DLVRDALTRI…DDRLLLVRGR (105 aa)). Residues 183–184 (LI), Lys-265, Gly-287, and Gln-296 contribute to the ATP site. Residues Cys-344 and Cys-456 are joined by a disulfide bond. The 79-residue stretch at 404 to 482 (LAEGDVVLDI…GYDNVRVYRP (79 aa)) folds into the Rhodanese domain. Residue Cys-456 is the Cysteine persulfide intermediate of the active site.

The protein belongs to the ThiI family.

It is found in the cytoplasm. The catalysed reaction is [ThiI sulfur-carrier protein]-S-sulfanyl-L-cysteine + a uridine in tRNA + 2 reduced [2Fe-2S]-[ferredoxin] + ATP + H(+) = [ThiI sulfur-carrier protein]-L-cysteine + a 4-thiouridine in tRNA + 2 oxidized [2Fe-2S]-[ferredoxin] + AMP + diphosphate. It catalyses the reaction [ThiS sulfur-carrier protein]-C-terminal Gly-Gly-AMP + S-sulfanyl-L-cysteinyl-[cysteine desulfurase] + AH2 = [ThiS sulfur-carrier protein]-C-terminal-Gly-aminoethanethioate + L-cysteinyl-[cysteine desulfurase] + A + AMP + 2 H(+). It functions in the pathway cofactor biosynthesis; thiamine diphosphate biosynthesis. Functionally, catalyzes the ATP-dependent transfer of a sulfur to tRNA to produce 4-thiouridine in position 8 of tRNAs, which functions as a near-UV photosensor. Also catalyzes the transfer of sulfur to the sulfur carrier protein ThiS, forming ThiS-thiocarboxylate. This is a step in the synthesis of thiazole, in the thiamine biosynthesis pathway. The sulfur is donated as persulfide by IscS. The chain is tRNA sulfurtransferase from Edwardsiella ictaluri (strain 93-146).